Here is a 181-residue protein sequence, read N- to C-terminus: Large ribosomal subunit protein uL5 (181 aa).

The protein belongs to the universal ribosomal protein uL5 family. Part of the 50S ribosomal subunit; part of the 5S rRNA/L5/L18/L25 subcomplex. Contacts the 5S rRNA and the P site tRNA. Forms a bridge to the 30S subunit in the 70S ribosome.

Functionally, this is one of the proteins that bind and probably mediate the attachment of the 5S RNA into the large ribosomal subunit, where it forms part of the central protuberance. In the 70S ribosome it contacts protein S13 of the 30S subunit (bridge B1b), connecting the 2 subunits; this bridge is implicated in subunit movement. Contacts the P site tRNA; the 5S rRNA and some of its associated proteins might help stabilize positioning of ribosome-bound tRNAs. The protein is Large ribosomal subunit protein uL5 of Helicobacter hepaticus (strain ATCC 51449 / 3B1).